Here is a 3174-residue protein sequence, read N- to C-terminus: Probable polyketide synthase 15 (3174 aa).

The Ketosynthase family 3 (KS3) domain maps to 23–474 (NDEIAIVGIG…GSNCCLILSQ (452 aa)). Catalysis depends on for beta-ketoacyl synthase activity residues Cys194, His342, and His397. Coiled-coil stretches lie at residues 472–509 (LSQF…QYDN) and 574–604 (EFNK…RVQT). Residues 578–599 (QKQSQKEKEKEKEREGEEKEQL) are compositionally biased toward basic and acidic residues. The tract at residues 578–601 (QKQSQKEKEKEKEREGEEKEQLNR) is disordered. An acyl/malonyl transferase region spans residues 707–740 (GIEASFIVGHSLGEIPAAYCSGMITLDTLCYLIY). The active-site For acyl/malonyl transferase activity is Ser717. The N-terminal hotdog fold stretch occupies residues 1034-1156 (IDILGLSNYD…ANFQLLNNNN (123 aa)). The PKS/mFAS DH domain maps to 1034-1332 (IDILGLSNYD…CKSLKIVKNP (299 aa)). Residue His1068 is the Proton acceptor; for dehydratase activity of the active site. The C-terminal hotdog fold stretch occupies residues 1182–1332 (NKTKISRIDL…CKSLKIVKNP (151 aa)). Asp1241 acts as the Proton donor; for dehydratase activity in catalysis. The stretch at 1758-1793 (LEININNNNNNNNNNNNNNNNNNNNNNNNNNYEDNV) forms a coiled coil. A Carrier domain is found at 2653 to 2730 (VDSLNIKDIF…LVIKIIITAI (78 aa)). At Ser2690 the chain carries O-(pantetheine 4'-phosphoryl)serine.

Pantetheine 4'-phosphate serves as cofactor.

Probable polyketide synthase. This is Probable polyketide synthase 15 (pks15) from Dictyostelium discoideum (Social amoeba).